Reading from the N-terminus, the 414-residue chain is Glyco-Gag protein (414 aa).

At 1-51 the chain is on the cytoplasmic side; that stretch reads MSGASSGTAIGAHLFGVSPECRVLIGDEGAGPSKSLSEVSFSVWYQSRAAR. A helical membrane pass occupies residues 52–72; the sequence is LVIFCLVASFLVPCLTFLIAE. Topologically, residues 73 to 414 are extracellular; the sequence is TVMGQTIATP…TNLAQVKQVV (342 aa). The N-linked (GlcNAc...) asparagine; by host glycan is linked to Asn-134. Residues 171 to 282 are disordered; sequence VRPFLPPPKP…LREGPNNRPQ (112 aa). The span at 174-193 shows a compositional bias: pro residues; the sequence is FLPPPKPPTPLPQPLSPQPS. The segment covering 194–206 has biased composition (low complexity); that stretch reads APLTSSLYPVLPK. The segment covering 210-220 has biased composition (pro residues); sequence PKPPVLPPDPS.

Glycosylated by host. In terms of processing, cleaved by host near the middle of the molecule, releasing the c-terminal half containing capsid and nucleoprotein domains op GAG.

The protein localises to the host cell membrane. Plays a role in viral particle release. Presumably acts by facilitating the fission of the virion bud at the cell surface. In Felidae (cat family), this protein is Glyco-Gag protein.